Reading from the N-terminus, the 795-residue chain is Lon protease (795 aa).

Positions Gly11 to Lys203 constitute a Lon N-terminal domain. Gly356–Thr363 provides a ligand contact to ATP. A Lon proteolytic domain is found at Asp593 to Ile771. Residues Ser677 and Lys720 contribute to the active site.

Belongs to the peptidase S16 family. Homohexamer. Organized in a ring with a central cavity.

It localises to the cytoplasm. The catalysed reaction is Hydrolysis of proteins in presence of ATP.. In terms of biological role, ATP-dependent serine protease that mediates the selective degradation of mutant and abnormal proteins as well as certain short-lived regulatory proteins. Required for cellular homeostasis and for survival from DNA damage and developmental changes induced by stress. Degrades polypeptides processively to yield small peptide fragments that are 5 to 10 amino acids long. Binds to DNA in a double-stranded, site-specific manner. This is Lon protease from Clostridium beijerinckii (strain ATCC 51743 / NCIMB 8052) (Clostridium acetobutylicum).